The following is a 118-amino-acid chain: Small ribosomal subunit protein uS13 (118 aa).

Residues 94-118 form a disordered region; the sequence is SLPLRGQRTKTNARTRKGPRKPIRK.

It belongs to the universal ribosomal protein uS13 family. Part of the 30S ribosomal subunit. Forms a loose heterodimer with protein S19. Forms two bridges to the 50S subunit in the 70S ribosome.

In terms of biological role, located at the top of the head of the 30S subunit, it contacts several helices of the 16S rRNA. In the 70S ribosome it contacts the 23S rRNA (bridge B1a) and protein L5 of the 50S subunit (bridge B1b), connecting the 2 subunits; these bridges are implicated in subunit movement. Contacts the tRNAs in the A and P-sites. This is Small ribosomal subunit protein uS13 from Shewanella sp. (strain W3-18-1).